We begin with the raw amino-acid sequence, 875 residues long: uncharacterized protein (875 aa).

The segment at 83 to 149 (PFQPPPPQPF…QPPQPPPQQL (67 aa)) is disordered. Residues 101–147 (QQPPQPPPDQPQQPQPPQQPPQQPPQQQPQPPQPPQQPPQPPQPPPQ) are compositionally biased toward pro residues.

This is an uncharacterized protein from Orgyia pseudotsugata multicapsid polyhedrosis virus (OpMNPV).